Reading from the N-terminus, the 20-residue chain is Trypsin inhibitor DE-3 (20 aa).

This sequence belongs to the protease inhibitor I3 (leguminous Kunitz-type inhibitor) family.

Inhibition of trypsin. The polypeptide is Trypsin inhibitor DE-3 (Erythrina corallodendron (Coral tree)).